Reading from the N-terminus, the 417-residue chain is Gamma-glutamyl phosphate reductase (417 aa).

It belongs to the gamma-glutamyl phosphate reductase family.

It is found in the cytoplasm. The catalysed reaction is L-glutamate 5-semialdehyde + phosphate + NADP(+) = L-glutamyl 5-phosphate + NADPH + H(+). The protein operates within amino-acid biosynthesis; L-proline biosynthesis; L-glutamate 5-semialdehyde from L-glutamate: step 2/2. In terms of biological role, catalyzes the NADPH-dependent reduction of L-glutamate 5-phosphate into L-glutamate 5-semialdehyde and phosphate. The product spontaneously undergoes cyclization to form 1-pyrroline-5-carboxylate. In Klebsiella pneumoniae subsp. pneumoniae (strain ATCC 700721 / MGH 78578), this protein is Gamma-glutamyl phosphate reductase.